The sequence spans 36 residues: Protein usd (36 aa).

Its function is as follows. Required for translation of SpoIIID. This Bacillus subtilis (strain 168) protein is Protein usd (usd).